Here is a 201-residue protein sequence, read N- to C-terminus: Oligoribonuclease (201 aa).

The region spanning 20 to 183 (LVWLDMEMTG…ADIHESIDEL (164 aa)) is the Exonuclease domain. Residue tyrosine 141 is part of the active site.

It belongs to the oligoribonuclease family.

The protein resides in the cytoplasm. Functionally, 3'-to-5' exoribonuclease specific for small oligoribonucleotides. This chain is Oligoribonuclease, found in Burkholderia mallei (strain NCTC 10229).